The chain runs to 284 residues: Bifunctional protein FolD (284 aa).

NADP(+) contacts are provided by residues glycine 165–serine 167 and serine 190.

It belongs to the tetrahydrofolate dehydrogenase/cyclohydrolase family. In terms of assembly, homodimer.

The enzyme catalyses (6R)-5,10-methylene-5,6,7,8-tetrahydrofolate + NADP(+) = (6R)-5,10-methenyltetrahydrofolate + NADPH. The catalysed reaction is (6R)-5,10-methenyltetrahydrofolate + H2O = (6R)-10-formyltetrahydrofolate + H(+). It functions in the pathway one-carbon metabolism; tetrahydrofolate interconversion. Catalyzes the oxidation of 5,10-methylenetetrahydrofolate to 5,10-methenyltetrahydrofolate and then the hydrolysis of 5,10-methenyltetrahydrofolate to 10-formyltetrahydrofolate. This is Bifunctional protein FolD from Streptococcus equi subsp. zooepidemicus (strain MGCS10565).